Consider the following 285-residue polypeptide: 2,3,4,5-tetrahydropyridine-2,6-dicarboxylate N-succinyltransferase (285 aa).

Substrate is bound by residues Arg111 and Asp148.

Belongs to the transferase hexapeptide repeat family. In terms of assembly, homotrimer.

It is found in the cytoplasm. The catalysed reaction is (S)-2,3,4,5-tetrahydrodipicolinate + succinyl-CoA + H2O = (S)-2-succinylamino-6-oxoheptanedioate + CoA. It functions in the pathway amino-acid biosynthesis; L-lysine biosynthesis via DAP pathway; LL-2,6-diaminopimelate from (S)-tetrahydrodipicolinate (succinylase route): step 1/3. This is 2,3,4,5-tetrahydropyridine-2,6-dicarboxylate N-succinyltransferase from Sinorhizobium medicae (strain WSM419) (Ensifer medicae).